Reading from the N-terminus, the 148-residue chain is UPF0178 protein LPC_0108 (148 aa).

The protein belongs to the UPF0178 family.

This is UPF0178 protein LPC_0108 from Legionella pneumophila (strain Corby).